The sequence spans 35 residues: Sperm-specific protein Phi-1 (35 aa).

2 stretches are compositionally biased toward basic residues: residues 1-17 (PSPT…RSRS) and 25-35 (AAKRAKSKTAK). The disordered stretch occupies residues 1 to 35 (PSPTRRSKSRSKSRSRSRSASAGKAAKRAKSKTAK).

In terms of tissue distribution, sperm.

Its subcellular location is the nucleus. The protein resides in the chromosome. In terms of biological role, involved in nuclear basic protein transition: histones are replaced by spermatid specific proteins which are themselves replaced by protamines in late spermatids. This is Sperm-specific protein Phi-1 from Mytilus californianus (California mussel).